We begin with the raw amino-acid sequence, 185 residues long: Large ribosomal subunit protein uL16m (185 aa).

This sequence belongs to the universal ribosomal protein uL16 family.

It is found in the mitochondrion. The sequence is that of Large ribosomal subunit protein uL16m (RPL16) from Zea mays (Maize).